We begin with the raw amino-acid sequence, 124 residues long: UPF0344 protein BH2983 (124 aa).

4 helical membrane-spanning segments follow: residues 15–35 (GSWA…KAGK), 40–60 (KILH…GAGM), 61–81 (LVYW…IVLI), and 102–122 (IYWI…YNVI).

This sequence belongs to the UPF0344 family.

Its subcellular location is the cell membrane. This is UPF0344 protein BH2983 from Halalkalibacterium halodurans (strain ATCC BAA-125 / DSM 18197 / FERM 7344 / JCM 9153 / C-125) (Bacillus halodurans).